The primary structure comprises 325 residues: Bifunctional nuclease 1 (325 aa).

The BFN domain maps to 117–252 (CVHNNPQGGH…YLAYSDGMRV (136 aa)). Residues 284–318 (TKEFNILSKMMQAVDEERYDEAAEWRDKLGQFRAK) enclose the UVR domain.

The protein belongs to the bifunctional nuclease family.

It localises to the nucleus. Functionally, bifunctional nuclease with both RNase and DNase activities. Involved in basal defense response. Participates in abscisic acid-derived callose deposition following infection by a necrotrophic pathogen. The polypeptide is Bifunctional nuclease 1 (BBD1) (Arabidopsis thaliana (Mouse-ear cress)).